Reading from the N-terminus, the 218-residue chain is Riboflavin synthase (218 aa).

2 Lumazine-binding repeats span residues 1 to 97 and 98 to 194; these read MFTG…LGGH and LVSG…EKLI. 2,4-dihydroxypteridine is bound by residues 4 to 6, 48 to 50, 62 to 67, 101 to 103, K136, 145 to 147, and 159 to 164; these read GII, CLT, DLSLET, GHV, SLT, and TIVPHT.

In terms of assembly, homotrimer.

The catalysed reaction is 2 6,7-dimethyl-8-(1-D-ribityl)lumazine + H(+) = 5-amino-6-(D-ribitylamino)uracil + riboflavin. Its pathway is cofactor biosynthesis; riboflavin biosynthesis; riboflavin from 2-hydroxy-3-oxobutyl phosphate and 5-amino-6-(D-ribitylamino)uracil: step 2/2. In terms of biological role, catalyzes the dismutation of two molecules of 6,7-dimethyl-8-ribityllumazine, resulting in the formation of riboflavin and 5-amino-6-(D-ribitylamino)uracil. In Photobacterium leiognathi, this protein is Riboflavin synthase (ribE).